A 187-amino-acid polypeptide reads, in one-letter code: uncharacterized protein (187 aa).

The HTH tetR-type domain occupies 6 to 66 (TDLAEQIFSA…QFAHRVFSMF (61 aa)). The segment at residues 29-48 (SMLKLAKEANVAAGTIYLYF) is a DNA-binding region (H-T-H motif).

This is an uncharacterized protein from Haemophilus influenzae (strain ATCC 51907 / DSM 11121 / KW20 / Rd).